A 180-amino-acid polypeptide reads, in one-letter code: Nucleoside triphosphate/diphosphate phosphatase (180 aa).

The active-site Proton donor is Arg-26. Positions 90, 106, 108, 110, 123, and 126 each coordinate Mg(2+).

It belongs to the Ntdp family. Requires Mg(2+) as cofactor.

It carries out the reaction a ribonucleoside 5'-triphosphate + H2O = a ribonucleoside 5'-diphosphate + phosphate + H(+). The catalysed reaction is a ribonucleoside 5'-diphosphate + H2O = a ribonucleoside 5'-phosphate + phosphate + H(+). Has nucleoside phosphatase activity towards nucleoside triphosphates and nucleoside diphosphates. This is Nucleoside triphosphate/diphosphate phosphatase from Staphylococcus saprophyticus subsp. saprophyticus (strain ATCC 15305 / DSM 20229 / NCIMB 8711 / NCTC 7292 / S-41).